Consider the following 364-residue polypeptide: Peptide chain release factor 1 (364 aa).

An N5-methylglutamine modification is found at glutamine 237.

It belongs to the prokaryotic/mitochondrial release factor family. Methylated by PrmC. Methylation increases the termination efficiency of RF1.

Its subcellular location is the cytoplasm. Functionally, peptide chain release factor 1 directs the termination of translation in response to the peptide chain termination codons UAG and UAA. The chain is Peptide chain release factor 1 from Mycoplasma mycoides subsp. mycoides SC (strain CCUG 32753 / NCTC 10114 / PG1).